A 515-amino-acid chain; its full sequence is Adenine DNA glycosylase (515 aa).

Residues 1 to 24 (MKKLQASVRSHKKQPANHKRRRTR) show a composition bias toward basic residues. The disordered stretch occupies residues 1–38 (MKKLQASVRSHKKQPANHKRRRTRALSSSQAKPSSLDG). The active-site Proton donor/acceptor is the Glu-105. [4Fe-4S] cluster contacts are provided by Cys-261, Cys-268, Cys-271, and Cys-277. Positions 335–466 (PREEYSATCV…AMKKVFRMYE (132 aa)) constitute a Nudix hydrolase domain. The Nudix box signature appears at 376–398 (VTLEPSEQHQHKALLQELQRWCG). Residues 468-494 (HRQGTRKGSKRSQVCPPSSRKKPSLGQ) are disordered.

It belongs to the Nth/MutY family. [4Fe-4S] cluster is required as a cofactor. In terms of tissue distribution, expressed in heart, lung, liver, intestine, brain and thymus.

Its subcellular location is the nucleus. It is found in the mitochondrion. It carries out the reaction Hydrolyzes free adenine bases from 7,8-dihydro-8-oxoguanine:adenine mismatched double-stranded DNA, leaving an apurinic site.. Functionally, involved in oxidative DNA damage repair. Initiates repair of A*oxoG to C*G by removing the inappropriately paired adenine base from the DNA backbone. Possesses both adenine and 2-OH-A DNA glycosylase activities. The polypeptide is Adenine DNA glycosylase (Mutyh) (Mus musculus (Mouse)).